Reading from the N-terminus, the 312-residue chain is Cell division control protein 2 homolog D (312 aa).

The 291-residue stretch at 14-304 folds into the Protein kinase domain; that stretch reads FVKLEKVGEG…AKKAMEHPYF (291 aa). Residues 20 to 28 and Lys43 contribute to the ATP site; that span reads VGEGTYGKV. Thr24 bears the Phosphothreonine mark. Tyr25 bears the Phosphotyrosine mark. Asp145 functions as the Proton acceptor in the catalytic mechanism. At Thr179 the chain carries Phosphothreonine; by CAK.

It belongs to the protein kinase superfamily. CMGC Ser/Thr protein kinase family. CDC2/CDKX subfamily.

The enzyme catalyses L-seryl-[protein] + ATP = O-phospho-L-seryl-[protein] + ADP + H(+). It carries out the reaction L-threonyl-[protein] + ATP = O-phospho-L-threonyl-[protein] + ADP + H(+). The catalysed reaction is [DNA-directed RNA polymerase] + ATP = phospho-[DNA-directed RNA polymerase] + ADP + H(+). Its function is as follows. Plays a key role in the control of the eukaryotic cell cycle. In Antirrhinum majus (Garden snapdragon), this protein is Cell division control protein 2 homolog D (CDC2D).